A 130-amino-acid polypeptide reads, in one-letter code: Small ribosomal subunit protein uS8 (130 aa).

Belongs to the universal ribosomal protein uS8 family. As to quaternary structure, part of the 30S ribosomal subunit.

One of the primary rRNA binding proteins, it binds directly to 16S rRNA central domain where it helps coordinate assembly of the platform of the 30S subunit. The protein is Small ribosomal subunit protein uS8 of Thermococcus sibiricus (strain DSM 12597 / MM 739).